A 233-amino-acid chain; its full sequence is MLTHANWQEPNINFQVDEMYRGALEVLRWSYQEYGNEIVYACSFGIEGIVLIDLISKVKPNATIVFLDTDVHFKETYETIRRVKEKYPQLNIVMKKSALTLEQQAAQYGEELWKSDPNQCCAIRKIKPLHEALSGTKAWISGLRREQSPTRQQTNFLNRDDKFKSIKVCPLIHWTWKDVWRYVSKNNLPYNPLHDQGYPSIGCEHCTKPAFTMDDLRSGRWQGSGKTECGLHE.

[4Fe-4S] cluster-binding residues include Cys120, Cys121, Cys203, and Cys206. The active-site Nucleophile; cysteine thiosulfonate intermediate is the Cys229.

This sequence belongs to the PAPS reductase family. CysH subfamily. [4Fe-4S] cluster serves as cofactor.

Its subcellular location is the cytoplasm. The enzyme catalyses [thioredoxin]-disulfide + sulfite + AMP + 2 H(+) = adenosine 5'-phosphosulfate + [thioredoxin]-dithiol. Its pathway is sulfur metabolism; hydrogen sulfide biosynthesis; sulfite from sulfate. Catalyzes the formation of sulfite from adenosine 5'-phosphosulfate (APS) using thioredoxin as an electron donor. This chain is Adenosine 5'-phosphosulfate reductase, found in Lysinibacillus sphaericus (strain C3-41).